The following is a 207-amino-acid chain: dITP/XTP pyrophosphatase (207 aa).

11–16 provides a ligand contact to substrate; it reads TGNPGK. Asp-72 (proton acceptor) is an active-site residue. Mg(2+) is bound at residue Asp-72. Substrate-binding positions include Ser-73, 154-157, Lys-177, and 182-183; these read FGYD and HR.

The protein belongs to the HAM1 NTPase family. As to quaternary structure, homodimer. Requires Mg(2+) as cofactor.

It catalyses the reaction XTP + H2O = XMP + diphosphate + H(+). The enzyme catalyses dITP + H2O = dIMP + diphosphate + H(+). It carries out the reaction ITP + H2O = IMP + diphosphate + H(+). Its function is as follows. Pyrophosphatase that catalyzes the hydrolysis of nucleoside triphosphates to their monophosphate derivatives, with a high preference for the non-canonical purine nucleotides XTP (xanthosine triphosphate), dITP (deoxyinosine triphosphate) and ITP. Seems to function as a house-cleaning enzyme that removes non-canonical purine nucleotides from the nucleotide pool, thus preventing their incorporation into DNA/RNA and avoiding chromosomal lesions. The protein is dITP/XTP pyrophosphatase of Thermus thermophilus (strain ATCC 27634 / DSM 579 / HB8).